Reading from the N-terminus, the 268-residue chain is Aliphatic sulfonates import ATP-binding protein SsuB (268 aa).

The 222-residue stretch at L15–L236 folds into the ABC transporter domain. G47 to S54 lines the ATP pocket.

The protein belongs to the ABC transporter superfamily. Aliphatic sulfonates importer (TC 3.A.1.17.2) family. The complex is composed of two ATP-binding proteins (SsuB), two transmembrane proteins (SsuC) and a solute-binding protein (SsuA).

The protein localises to the cell inner membrane. It catalyses the reaction ATP + H2O + aliphatic sulfonate-[sulfonate-binding protein]Side 1 = ADP + phosphate + aliphatic sulfonateSide 2 + [sulfonate-binding protein]Side 1.. Its function is as follows. Part of the ABC transporter complex SsuABC involved in aliphatic sulfonates import. Responsible for energy coupling to the transport system. This is Aliphatic sulfonates import ATP-binding protein SsuB from Pseudomonas fluorescens (strain Pf0-1).